The following is a 273-amino-acid chain: Ribosomal RNA small subunit methyltransferase A (273 aa).

Residues Asn18, Leu20, Gly45, Glu66, Asp91, and Asn113 each coordinate S-adenosyl-L-methionine.

The protein belongs to the class I-like SAM-binding methyltransferase superfamily. rRNA adenine N(6)-methyltransferase family. RsmA subfamily.

It localises to the cytoplasm. It carries out the reaction adenosine(1518)/adenosine(1519) in 16S rRNA + 4 S-adenosyl-L-methionine = N(6)-dimethyladenosine(1518)/N(6)-dimethyladenosine(1519) in 16S rRNA + 4 S-adenosyl-L-homocysteine + 4 H(+). Functionally, specifically dimethylates two adjacent adenosines (A1518 and A1519) in the loop of a conserved hairpin near the 3'-end of 16S rRNA in the 30S particle. May play a critical role in biogenesis of 30S subunits. The sequence is that of Ribosomal RNA small subunit methyltransferase A from Citrobacter koseri (strain ATCC BAA-895 / CDC 4225-83 / SGSC4696).